The sequence spans 72 residues: MYRWCMSRTNIDIDDELAAEVMRRFGLTTKRAAVDLALRRLVGSPLSREFLLGLEGVGWEGDLDDLRSDRPD.

Antitoxin component of a type II toxin-antitoxin (TA) system. This Mycobacterium tuberculosis (strain CDC 1551 / Oshkosh) protein is Antitoxin VapB11 (vapB11).